We begin with the raw amino-acid sequence, 763 residues long: G protein-regulated inducer of neurite outgrowth 3 (763 aa).

Disordered stretches follow at residues methionine 1–valine 48, glutamine 65–leucine 111, and glutamate 192–cysteine 268. The span at glutamate 27 to glycine 44 shows a compositional bias: polar residues. A compositionally biased stretch (basic and acidic residues) spans lysine 93 to lysine 104. The segment covering glutamate 237–alanine 250 has biased composition (polar residues). Phosphoserine occurs at positions 323 and 359. 3 disordered regions span residues threonine 420–glutamine 452, asparagine 471–glycine 624, and valine 711–histidine 737. Residues lysine 437–aspartate 450 show a composition bias toward polar residues. Composition is skewed to basic and acidic residues over residues arginine 480–serine 496 and proline 518–alanine 539. The segment covering serine 593–glycine 609 has biased composition (low complexity).

In terms of biological role, may be involved in neurite outgrowth. This is G protein-regulated inducer of neurite outgrowth 3 (Gprin3) from Mus musculus (Mouse).